The primary structure comprises 123 residues: UPF0102 protein PSHAa2523 (123 aa).

It belongs to the UPF0102 family.

The polypeptide is UPF0102 protein PSHAa2523 (Pseudoalteromonas translucida (strain TAC 125)).